Reading from the N-terminus, the 189-residue chain is NADH-quinone oxidoreductase subunit B (189 aa).

[4Fe-4S] cluster is bound by residues cysteine 39, cysteine 40, cysteine 104, and cysteine 135.

Belongs to the complex I 20 kDa subunit family. As to quaternary structure, NDH-1 is composed of 14 different subunits. Subunits NuoB, C, D, E, F, and G constitute the peripheral sector of the complex. [4Fe-4S] cluster is required as a cofactor.

It localises to the cell inner membrane. It catalyses the reaction a quinone + NADH + 5 H(+)(in) = a quinol + NAD(+) + 4 H(+)(out). In terms of biological role, NDH-1 shuttles electrons from NADH, via FMN and iron-sulfur (Fe-S) centers, to quinones in the respiratory chain. The immediate electron acceptor for the enzyme in this species is believed to be a menaquinone. Couples the redox reaction to proton translocation (for every two electrons transferred, four hydrogen ions are translocated across the cytoplasmic membrane), and thus conserves the redox energy in a proton gradient. In Chlorobaculum parvum (strain DSM 263 / NCIMB 8327) (Chlorobium vibrioforme subsp. thiosulfatophilum), this protein is NADH-quinone oxidoreductase subunit B.